The following is a 535-amino-acid chain: 2-(3-amino-3-carboxypropyl)histidine synthase subunit 2 (535 aa).

[4Fe-4S] cluster-binding residues include Cys-107, Cys-128, and Cys-342. Residues 390–401 (NDKPEDASKESE) show a composition bias toward basic and acidic residues. Disordered stretches follow at residues 390-471 (NDKP…QQND) and 512-535 (ASTLVEEGRSGVARGYEVGESGRH). Residues 404–424 (VAEEEVEFEDVAGGVEGEESA) show a composition bias toward acidic residues. Positions 449 to 471 (NPSTTAETEANSDGQPTSTQQND) are enriched in polar residues.

Belongs to the DPH1/DPH2 family. DPH2 subfamily. In terms of assembly, component of the 2-(3-amino-3-carboxypropyl)histidine synthase complex composed of DPH1, DPH2, DPH3 and a NADH-dependent reductase, predominantly CBR1. Requires [4Fe-4S] cluster as cofactor.

The protein resides in the cytoplasm. Its pathway is protein modification; peptidyl-diphthamide biosynthesis. Required for the first step of diphthamide biosynthesis, a post-translational modification of histidine which occurs in elongation factor 2. DPH1 and DPH2 transfer a 3-amino-3-carboxypropyl (ACP) group from S-adenosyl-L-methionine (SAM) to a histidine residue, the reaction is assisted by a reduction system comprising DPH3 and a NADH-dependent reductase, predominantly CBR1. Facilitates the reduction of the catalytic iron-sulfur cluster found in the DPH1 subunit. This Gibberella zeae (strain ATCC MYA-4620 / CBS 123657 / FGSC 9075 / NRRL 31084 / PH-1) (Wheat head blight fungus) protein is 2-(3-amino-3-carboxypropyl)histidine synthase subunit 2 (DPH2).